Reading from the N-terminus, the 203-residue chain is Urease accessory protein UreG (203 aa).

Residue 14-21 (GPVGSGKT) participates in GTP binding.

It belongs to the SIMIBI class G3E GTPase family. UreG subfamily. As to quaternary structure, homodimer. UreD, UreF and UreG form a complex that acts as a GTP-hydrolysis-dependent molecular chaperone, activating the urease apoprotein by helping to assemble the nickel containing metallocenter of UreC. The UreE protein probably delivers the nickel.

The protein localises to the cytoplasm. In terms of biological role, facilitates the functional incorporation of the urease nickel metallocenter. This process requires GTP hydrolysis, probably effectuated by UreG. This is Urease accessory protein UreG from Rhizobium rhizogenes (strain K84 / ATCC BAA-868) (Agrobacterium radiobacter).